The sequence spans 285 residues: UstYa family oxidase phomYe (285 aa).

A helical membrane pass occupies residues 32 to 54 (LFYGWKGIAFLSTLTNVLFISGF). Residues 143–165 (YGFGTPLTGPGSEGNEHDPTPWT) form a disordered region. The HXXHC 1 motif lies at 177–181 (HQLHC). A glycan (N-linked (GlcNAc...) asparagine) is linked at Asn202. The HXXHC 2 signature appears at 209–213 (HVDHC).

This sequence belongs to the ustYa family.

The protein resides in the membrane. It participates in mycotoxin biosynthesis. UstYa family oxidase; part of the gene cluster that mediates the biosynthesis of the phomopsins, a group of hexapeptide mycotoxins which infects lupins and causes lupinosis disease in livestock. Within the pathway, phomYe catalyzes the desaturation of the Pro moiety into 3,4-dehydroproline (dPro). The pathway starts with the processing of the precursor phomA by several endopeptidases including kexin proteases as well as the cluster-specific S41 family peptidase phomP1 and the oligopeptidase phomG to produce 10 identical copies of the hexapeptide Tyr-Val-Ile-Pro-Ile-Asp. After being excised from the precursor peptide, the core peptides are cyclized and modified post-translationally by enzymes encoded within the gene cluster. The timing and order of proteolysis of the phomA precursor and PTMs are still unknown. Two tyrosinase-like enzymes, phomQ1 and phomQ2, catalyze the chlorination and hydroxylation of Tyr, respectively. PhomYb, is proposed to be involved in the construction of the macrocyclic structure. The other 4 ustYa family proteins may be involved in PTMs that generate the unique structure of phomopsin A. PhomYa is required for the hydroxylation of C-beta of Tyr. PhomYc, phomYd, and phomYe are responsible for the biosynthesis of 2,3-dehydroisoleucine (dIle), 2,3-dehydroaspartic acid (dAsp), and 3,4-dehydroproline (dPro), respectively. While dIle formation by phomYc is indispensable for the installation of dAsp by phomYd, the order of the other PTMs have not been elucidated yet. Most of the biosynthetic enzymes likely have broad substrate specificity, and thus, there might be a metabolic grid from a precursor to phomopsin A. The enzyme(s) responsible for the biosynthesis of 3,4-dehydrovaline (dVal) have also not been identified yet. Finally, phomM acts as an S-adenosylmethionine-dependent alpha-N-methyltransferase that catalyzes two successive N-methylation reactions, converting N-desmethyl-phomopsin A to phomopsin A and phomopsin A further to an N,N-dimethylated congener called phomopsin E. The protein is UstYa family oxidase phomYe of Diaporthe leptostromiformis (Lupinosis disease fungus).